Here is a 160-residue protein sequence, read N- to C-terminus: Thy-1 membrane glycoprotein (160 aa).

An N-terminal signal peptide occupies residues 1 to 19; sequence MNPTVSIAVILTVLQAAHC. Gln20 bears the Pyrrolidone carboxylic acid mark. One can recognise an Ig-like V-type domain in the interval 20-120; sequence QMIRDLSACL…YTGNQIKNIT (101 aa). 2 disulfides stabilise this stretch: Cys28–Cys129 and Cys38–Cys103. N-linked (GlcNAc...) asparagine glycosylation is found at Asn42, Asn78, and Asn118. A lipid anchor (GPI-anchor amidated cysteine) is attached at Cys129. A propeptide spans 130 to 160 (removed in mature form); that stretch reads VRLSLLIQNTSWLLLLLLSLPLLQAVDFVSL. A glycan (N-linked (GlcNAc...) asparagine) is linked at Asn138.

The N-terminus is blocked. Forebrain, cerebellum and tectum.

It localises to the cell membrane. Functionally, may play a role in cell-cell or cell-ligand interactions during synaptogenesis and other events in the brain. The sequence is that of Thy-1 membrane glycoprotein (THY1) from Gallus gallus (Chicken).